Reading from the N-terminus, the 334-residue chain is Aspartate carbamoyltransferase catalytic subunit (334 aa).

Residues arginine 71 and threonine 72 each contribute to the carbamoyl phosphate site. Lysine 99 contacts L-aspartate. Residues arginine 121, histidine 151, and glutamine 154 each coordinate carbamoyl phosphate. L-aspartate-binding residues include arginine 184 and arginine 239. Carbamoyl phosphate contacts are provided by glycine 280 and proline 281.

It belongs to the aspartate/ornithine carbamoyltransferase superfamily. ATCase family. In terms of assembly, heterododecamer (2C3:3R2) of six catalytic PyrB chains organized as two trimers (C3), and six regulatory PyrI chains organized as three dimers (R2).

It carries out the reaction carbamoyl phosphate + L-aspartate = N-carbamoyl-L-aspartate + phosphate + H(+). It participates in pyrimidine metabolism; UMP biosynthesis via de novo pathway; (S)-dihydroorotate from bicarbonate: step 2/3. In terms of biological role, catalyzes the condensation of carbamoyl phosphate and aspartate to form carbamoyl aspartate and inorganic phosphate, the committed step in the de novo pyrimidine nucleotide biosynthesis pathway. This chain is Aspartate carbamoyltransferase catalytic subunit, found in Pseudomonas fluorescens (strain ATCC BAA-477 / NRRL B-23932 / Pf-5).